The following is a 375-amino-acid chain: 23S rRNA (uracil(747)-C(5))-methyltransferase RlmC (375 aa).

4 residues coordinate [4Fe-4S] cluster: Cys-3, Cys-11, Cys-14, and Cys-87. S-adenosyl-L-methionine is bound by residues Gln-212, Phe-241, Glu-262, and Asn-307. Cys-334 (nucleophile) is an active-site residue.

The protein belongs to the class I-like SAM-binding methyltransferase superfamily. RNA M5U methyltransferase family. RlmC subfamily.

The enzyme catalyses uridine(747) in 23S rRNA + S-adenosyl-L-methionine = 5-methyluridine(747) in 23S rRNA + S-adenosyl-L-homocysteine + H(+). Functionally, catalyzes the formation of 5-methyl-uridine at position 747 (m5U747) in 23S rRNA. This is 23S rRNA (uracil(747)-C(5))-methyltransferase RlmC from Escherichia coli (strain SMS-3-5 / SECEC).